Here is a 265-residue protein sequence, read N- to C-terminus: Polyglutamine-binding protein 1 (265 aa).

Residues E46–D80 enclose the WW domain. S94 carries the phosphoserine modification. The disordered stretch occupies residues S94–D265. The segment covering A99 to E175 has biased composition (basic and acidic residues). 15 tandem repeats follow at residues D104–S110, D111–S117, D118–P124, D125–S131, D132–S138, D139–R140, D141–R142, E143–R144, D150–R151, E152–R153, E154–R155, D156–R157, E158–R159, D160–R161, and D162–R163. Residues D104 to S138 form a 5 X 7 AA approximate tandem repeats of D-R-[SG]-H-D-K-S region. Residues D139–R144 are 3 X 2 AA tandem repeats of [DE]-R. The 7 X 2 AA tandem repeats of [DE]-R stretch occupies residues D150–R163. The interval Y245 to N255 is important for interaction with TXNL4A. A Phosphoserine modification is found at S247.

Interacts with POU3F2/Brn-2, ATXN1, TXNL4A, HTT and AR. Interaction with ATXN1 correlates positively with the length of the polyglutamine tract. Interacts with RNA polymerase II large subunit in a phosphorylation-dependent manner. Forms a ternary complex with ATXN1 mutant and phosphorylated RNA polymerase II. Interacts (via C-terminus) with TXNL4A and CD2BP2. Interacts (via WW domain) with ATN1 and SF3B1, and may interact with additional splice factors. Interacts (via WW domain) with WBP11; Leading to reduce interaction between PQBP1 and TXNL4A. Interacts with CAPRIN1. Interacts with DDX1. Interacts with SFPQ. Interacts with KHSRP.

The protein resides in the nucleus. It localises to the nucleus speckle. Its subcellular location is the cytoplasmic granule. Functionally, intrinsically disordered protein that acts as a scaffold, and which is involved in different processes, such as pre-mRNA splicing, transcription regulation, innate immunity and neuron development. Interacts with splicing-related factors via the intrinsically disordered region and regulates alternative splicing of target pre-mRNA species. May suppress the ability of POU3F2 to transactivate the DRD1 gene in a POU3F2 dependent manner. Can activate transcription directly or via association with the transcription machinery. May be involved in ATXN1 mutant-induced cell death. The interaction with ATXN1 mutant reduces levels of phosphorylated RNA polymerase II large subunit. Involved in the assembly of cytoplasmic stress granule, possibly by participating in the transport of neuronal RNA granules. Also acts as an innate immune sensor of infection by retroviruses, by detecting the presence of reverse-transcribed DNA in the cytosol. Directly binds retroviral reverse-transcribed DNA in the cytosol and interacts with CGAS, leading to activate the cGAS-STING signaling pathway, triggering type-I interferon production. This chain is Polyglutamine-binding protein 1 (PQBP1), found in Pongo pygmaeus (Bornean orangutan).